A 782-amino-acid chain; its full sequence is E3 ubiquitin-protein ligase SopA (782 aa).

The segment at V137 to A171 is disordered. Over residues P157 to A171 the composition is skewed to low complexity. Catalysis depends on C753, which acts as the Glycyl thioester intermediate.

Belongs to the SopA E3 ligase family. Ubiquitinated in the presence of host E1 ubiquitin-activating enzyme, E2 ubiquitin-conjugating enzyme and ubiquitin.

It localises to the secreted. The protein localises to the host cell. The enzyme catalyses S-ubiquitinyl-[E2 ubiquitin-conjugating enzyme]-L-cysteine + [acceptor protein]-L-lysine = [E2 ubiquitin-conjugating enzyme]-L-cysteine + N(6)-ubiquitinyl-[acceptor protein]-L-lysine.. Functionally, effector proteins function to alter host cell physiology and promote bacterial survival in host tissues. This protein is an E3 ubiquitin ligase that interferes with host's ubiquitination pathway. In Salmonella enteritidis PT4 (strain P125109), this protein is E3 ubiquitin-protein ligase SopA (sopA).